Reading from the N-terminus, the 719-residue chain is Protein STRUBBELIG-RECEPTOR FAMILY 6 (719 aa).

The first 29 residues, 1 to 29, serve as a signal peptide directing secretion; sequence MRENWAVVALFTLCIVGFELRFIHGATDA. The Extracellular portion of the chain corresponds to 30–293; the sequence is SDTSALNTLF…SKKSGIGAGA (264 aa). LRR repeat units follow at residues 97–118, 119–140, 143–164, 167–190, 191–213, and 214–234; these read SLTE…QFPP, NLQR…SLSQ, PLKY…DFSK, SLTT…SSLT, SLKS…AGLP, and LETL…SLKG. The disordered stretch occupies residues 242-287; sequence NSFNTGPAPPPPPGTPPIRGSPSRKSGGRESRSSDESTRNGDSKKS. Residues 248–257 are compositionally biased toward pro residues; sequence PAPPPPPGTP. Positions 268–286 are enriched in basic and acidic residues; that stretch reads GGRESRSSDESTRNGDSKK. A helical membrane pass occupies residues 294-314; sequence IAGIIISLLVVTALLVAFFLF. Over 315 to 719 the chain is Cytoplasmic; that stretch reads RRKKSKRSSP…GSADTTSDYM (405 aa). Disordered regions lie at residues 322 to 355 and 364 to 383; these read SSPM…SSVE and SINL…DEDS. The span at 332–354 shows a compositional bias: polar residues; sequence NQPFTLASNDFHENNSIQSSSSV. A Phosphoserine modification is found at serine 377. Positions 416-690 constitute a Protein kinase domain; that stretch reads FSVDNLLGEG…SEVVQALVVL (275 aa). ATP is bound by residues 422-430 and lysine 444; that span reads LGEGTFGRV. The interval 700 to 719 is disordered; it reads TVGVDPSQRAGSADTTSDYM. The span at 708 to 719 shows a compositional bias: polar residues; the sequence is RAGSADTTSDYM.

It belongs to the protein kinase superfamily. Ser/Thr protein kinase family. As to expression, expressed in seedlings, roots, stems, leaves, flowers and siliques.

Its subcellular location is the membrane. This chain is Protein STRUBBELIG-RECEPTOR FAMILY 6 (SRF6), found in Arabidopsis thaliana (Mouse-ear cress).